The chain runs to 129 residues: Prefoldin subunit 4 (129 aa).

Met1 is modified (N-acetylmethionine).

This sequence belongs to the prefoldin subunit beta family. Heterohexamer of two PFD-alpha type and four PFD-beta type subunits.

Its function is as follows. Binds specifically to cytosolic chaperonin (c-CPN) and transfers target proteins to it. Binds to nascent polypeptide chain and promotes folding in an environment in which there are many competing pathways for nonnative proteins. In Saccharomyces cerevisiae (strain ATCC 204508 / S288c) (Baker's yeast), this protein is Prefoldin subunit 4 (GIM3).